A 120-amino-acid polypeptide reads, in one-letter code: Large ribosomal subunit protein eL18 (120 aa).

Belongs to the eukaryotic ribosomal protein eL18 family.

In Methanococcus maripaludis (strain DSM 14266 / JCM 13030 / NBRC 101832 / S2 / LL), this protein is Large ribosomal subunit protein eL18.